Reading from the N-terminus, the 529-residue chain is Probable anion transporter 1, chloroplastic (529 aa).

Residues 1–55 (MLYLLPLSVSCRVPGSPPAPRSRRFLDPGGGRGVGDGLGGVRVFRRRALRGTDVR) constitute a chloroplast transit peptide. Disordered stretches follow at residues 13-39 (VPGS…DGLG) and 52-78 (TDVR…GGYG). Residues 28 to 39 (PGGGRGVGDGLG) show a composition bias toward gly residues. The segment covering 67–76 (RHDDARHDGG) has biased composition (basic and acidic residues). The next 11 helical transmembrane spans lie at 120–140 (WAIV…RVNM), 158–178 (VGLI…AGGI), 187–207 (TVLG…PFAA), 209–229 (LGLP…GVAM), 251–271 (LVYS…PLLI), 274–294 (FGWP…FSTW), 340–360 (VWAL…LLTW), 378–398 (LFCV…GWIA), 418–438 (IGFL…SPAM), 469–489 (AGVL…FGTA), and 503–523 (VFKV…LFST).

It belongs to the major facilitator superfamily. Sodium/anion cotransporter (TC 2.A.1.14) family.

It is found in the plastid. The protein localises to the chloroplast membrane. Probable anion transporter. The polypeptide is Probable anion transporter 1, chloroplastic (PHT4;1) (Oryza sativa subsp. japonica (Rice)).